The chain runs to 422 residues: MKTSYNLRSIAAKAIAQVLDQGLSLSSVIPELQKNISDKDKALLQELCFGTLRTLPQLEWIIQQLMDKPLKGKQRILHYLIMVGLYQLLYTRVPAHAALAETVNGAIALKKPQLKGLINGVLRQFQRQQDVLMERFQNNDSRYLHPSWLLTRIKNAYPELWESIIEGNNQKPPMWLRVNQIHHSREQYLALLEKEGISAFSDDHHPNAIRLETPCNVHLLPGFNEGWVTVQDRSAQRCAELLAPQNNEQILDLCAAPGGKTTHILEIAPKAHVLAIDIDEQRLARVKENLNRLKLHATVKSGDGRYPEQWCANMQFDRILLDAPCSATGVIRRHPDIKWLRRNEDIAQLAQIQKEILHAIWPYLKSGGTLVYATCSILPEENSQQIAAFLSSMQDAQCDYQHQCLPEQYSGDGFFYALINKK.

Residues 254-260 (CAAPGGK), aspartate 277, aspartate 303, and aspartate 322 contribute to the S-adenosyl-L-methionine site. The active-site Nucleophile is cysteine 375.

This sequence belongs to the class I-like SAM-binding methyltransferase superfamily. RsmB/NOP family.

It is found in the cytoplasm. The catalysed reaction is cytidine(967) in 16S rRNA + S-adenosyl-L-methionine = 5-methylcytidine(967) in 16S rRNA + S-adenosyl-L-homocysteine + H(+). Functionally, specifically methylates the cytosine at position 967 (m5C967) of 16S rRNA. In Proteus mirabilis (strain HI4320), this protein is Ribosomal RNA small subunit methyltransferase B.